We begin with the raw amino-acid sequence, 1479 residues long: MHKLIIKYNKQLKMLNLRDGKTYTISEDERADITLKSLGEVIHLEQNNQGTWQANHTSINKVLVRKGDLDDITLQLYTEADYASFAYPSIQDTMTIGPNAYDDMVIQSLMNAIIIKDFQSIQESQYVRIVHDKNTDVYINYELQEQLTNKAYIGDHIYVEGIWLEVQADGLNVLSQNTVASSLIRLTQEMPHAQADDYNTYHRSPRIIHREPTDDIKIERPPQPIQKNNTVIWRSIIPPLVMIALTVVIFLVRPIGIYILMMIGMSTVTIVFGITTYFSEKKKYNKDVEKREKDYKAYLDNKSKEINKAIKAQRFSLNYHYPTVAEIKDIVETKAPRIYEKTSHHHDFLHYKLGIANVEKSFKLDYQEEEFNQRRDELFDDAKELYEFYTDVEQAPLINDLNHGPIAYIGARHLILEELEKMLIQLSTFHSYHDLEFLFVTREDEVETLKWARWLPHMTLRGQNIRGFVYNQRTRDQILTSIYSMIKERIQAVRERSRSNEQIIFTPQLVFVITDMSLIIDHVILEYVNQDLSEYGISLIFVEDVIESLPEHVDTIIDIKSRTEGELITKEKELVQLKFTPENIDNVDKEYIARRLANLIHVEHLKNAIPDSITFLEMYNVKEVDQLDVVNRWRQNETYKTMAVPLGVRGKDDILSLNLHEKAHGPHGLVAGTTGSGKSEIIQSYILSLAINFHPHEVAFLLIDYKGGGMANLFKDLVHLVGTITNLDGDEAMRALTSIKAELRKRQRLFGEHDVNHINQYHKLFKEGVATEPMPHLFIISDEFAELKSEQPDFMKELVSTARIGRSLGIHLILATQKPSGVVDDQIWSNSKFKLALKVQDRQDSNEILKTPDAADITLPGRAYLQVGNNEIYELFQSAWSGATYDIEGDKLEVEDKTIYMINDYGQLQAINKDLSGLEDEETKENQTELEAVIDHIESITTRLEIEEVKRPWLPPLPENVYQEDLVETDFRKLWSDDAKEVELTLGLKDVPEEQYQGPMVLQLKKAGHIALIGSPGYGRTTFLHNIIFDVARHHRPDQAHMYLFDFGTNGLMPVTDIPHVADYFTVDQEDKIAKAIRIFNDEIDRRKKILSQYRVTSISEYRKLTGETIPYVFILIDNFDAVKDSPFQEVFENMMIKMTREGLALDMQVTLTASRANAMKTPMYINMKTRIAMFLYDKSEVSNVVGQQKFAVKDVVGRALLSSDDNVSFHIGQPFKHDETKSYNDQINDEVSAMTEFYKGETPNDIPMMPDEIKYEDYRESLSLPDIVANGALPIGLDYEGVTLQKIKLTEPAMISSENPREIAHIAEIMMKEIDILNEKYAICIADSSGEFKAYRHQVANFAEEREDIKAIHQLMIEDLKQREMDGPFEKDSLYIINDFKTYIDCTYIPEDDVKKLITKGPELGLNILFVGIHKELIDAYDKQIDVARKMINQFSIGIRISDQQFFKFRFIQREPVIKENEAYMVANQAYQKIRWFK.

Over 1–229 (MHKLIIKYNK…RPPQPIQKNN (229 aa)) the chain is Cytoplasmic. Residues 230-252 (TVIWRSIIPPLVMIALTVVIFLV) form a helical membrane-spanning segment. Residues 253 to 256 (RPIG) lie on the Extracellular side of the membrane. The helical transmembrane segment at 257-279 (IYILMMIGMSTVTIVFGITTYFS) threads the bilayer. The Cytoplasmic portion of the chain corresponds to 280–1479 (EKKKYNKDVE…QAYQKIRWFK (1200 aa)). FtsK domains follow at residues 652–846 (DDIL…QDSN) and 997–1183 (QGPM…SEVS). Residues 672–679 (GTTGSGKS) and 1014–1021 (GSPGYGRT) contribute to the ATP site.

It belongs to the EssC family. In terms of assembly, homooligomer. Interacts with EsaE.

The protein resides in the cell membrane. Component of the type VII secretion system (Ess). Required for the secretion of substrates including EsxA and EsxB. However, unable to support secretion of the substrate protein EsxC. This is Type VII secretion system protein EssC from Staphylococcus aureus (strain Mu50 / ATCC 700699).